The primary structure comprises 336 residues: MTEAQTACATTETPVAAPAAPRWRVADVIALYELPFNDLLFRAQQTHREHFDANAIQLSTLLSIKTGGCEEDCGYCSQSAHHDTGLKAEKLMEVDAVLAAARTAKENGATRFCMGAAWRNPKDRHIEPIKEMIRGVKDMGLETCVTLGMLEEHQAKALAEAGLDYYNHNLDTSPEFYGQIISTRTYQDRLDTLERVRDAGINVCCGGIIGMGESRRERAGLIAQLANMNPYPESVPINNLVAIEGTPLENAQALDPFEFVRTIAVARITMPKAMVRLSAGREQLDDAMQALCFLAGANSMFYGDVLLTTGNPRAEADRKLLARLGMWASEASQLSA.

The Radical SAM core domain occupies 54–281 (NAIQLSTLLS…KAMVRLSAGR (228 aa)). Residues cysteine 69, cysteine 73, and cysteine 76 each contribute to the [4Fe-4S] cluster site. [2Fe-2S] cluster-binding residues include cysteine 113, cysteine 144, cysteine 204, and arginine 276.

It belongs to the radical SAM superfamily. Biotin synthase family. As to quaternary structure, homodimer. [4Fe-4S] cluster serves as cofactor. [2Fe-2S] cluster is required as a cofactor.

The catalysed reaction is (4R,5S)-dethiobiotin + (sulfur carrier)-SH + 2 reduced [2Fe-2S]-[ferredoxin] + 2 S-adenosyl-L-methionine = (sulfur carrier)-H + biotin + 2 5'-deoxyadenosine + 2 L-methionine + 2 oxidized [2Fe-2S]-[ferredoxin]. It functions in the pathway cofactor biosynthesis; biotin biosynthesis; biotin from 7,8-diaminononanoate: step 2/2. In terms of biological role, catalyzes the conversion of dethiobiotin (DTB) to biotin by the insertion of a sulfur atom into dethiobiotin via a radical-based mechanism. The protein is Biotin synthase of Burkholderia pseudomallei (strain 1106a).